Reading from the N-terminus, the 121-residue chain is Probable V-type proton ATPase subunit F (121 aa).

The protein belongs to the V-ATPase F subunit family. V-ATPase is a heteromultimeric enzyme made up of two complexes: the ATP-hydrolytic V1 complex and the proton translocation V0 complex. The V1 complex consists of three catalytic AB heterodimers that form a heterohexamer, three peripheral stalks each consisting of EG heterodimers, one central rotor including subunits D and F, and the regulatory subunits C and H. The proton translocation complex V0 consists of the proton transport subunit a, a ring of proteolipid subunits c9c'', rotary subunit d, subunits e and f, and the accessory subunits vah-19/Ac45 and vah-20/PRR.

In terms of biological role, subunit of the V1 complex of vacuolar(H+)-ATPase (V-ATPase), a multisubunit enzyme composed of a peripheral complex (V1) that hydrolyzes ATP and a membrane integral complex (V0) that translocates protons. V-ATPase is responsible for acidifying and maintaining the pH of intracellular compartments and in some cell types, is targeted to the plasma membrane, where it is responsible for acidifying the extracellular environment. Required along with other vacuolar ATPase components for the removal of protein aggregates which form in immature oocytes in the distal gonad. This removal occurs as the oocytes mature and move to the proximal gonad, is triggered by the introduction of sperm through mating and occurs before fertilization. The introduction of sperm triggers V-ATPase accumulation in proximal oocytes and induces lysosomal acidification which leads to engulfing of protein aggregates by lysosomes and subsequent clearance of the aggregates. Lysosomal acidification also leads to changes in mitochondrial morphology and function. Mitochondria in distal immature oocytes are fragmented, produce high levels of reactive oxygen species (ROS) and have high membrane potential, indicative of metabolic inactivity. In contrast, mitochondria in proximal mature oocytes are tubular with lower ROS levels and membrane potential, indicative of an active metabolic state required for aggregate mobilization before clearance. The chain is Probable V-type proton ATPase subunit F from Caenorhabditis elegans.